Reading from the N-terminus, the 350-residue chain is Protein-glutamate methylesterase/protein-glutamine glutaminase 1 (350 aa).

Residues 1–116 enclose the Response regulatory domain; it reads MVVDDSAVVR…KGFLHDSAKV (116 aa). Aspartate 50 is subject to 4-aspartylphosphate. One can recognise a CheB-type methylesterase domain in the interval 160–350; it reads LKTTEQLVAI…IPQAILDCSH (191 aa). Residues serine 172, histidine 198, and aspartate 294 contribute to the active site.

This sequence belongs to the CheB family. Post-translationally, phosphorylated by CheA. Phosphorylation of the N-terminal regulatory domain activates the methylesterase activity.

It localises to the cytoplasm. It carries out the reaction [protein]-L-glutamate 5-O-methyl ester + H2O = L-glutamyl-[protein] + methanol + H(+). The catalysed reaction is L-glutaminyl-[protein] + H2O = L-glutamyl-[protein] + NH4(+). Its function is as follows. Involved in chemotaxis. Part of a chemotaxis signal transduction system that modulates chemotaxis in response to various stimuli. Catalyzes the demethylation of specific methylglutamate residues introduced into the chemoreceptors (methyl-accepting chemotaxis proteins or MCP) by CheR. Also mediates the irreversible deamidation of specific glutamine residues to glutamic acid. The polypeptide is Protein-glutamate methylesterase/protein-glutamine glutaminase 1 (Photobacterium profundum (strain SS9)).